A 302-amino-acid polypeptide reads, in one-letter code: MKKNRLNLNGVVVINKAKDISSNKVLQQLKYLFNAQKVGHTGTLDPMATGVLPICFGRATKIAQYLLDADKEYIATIRLGIETDSGDAEGEIIAKSINIPELSAEYLETVLAKFRGDVVQIPPMYSALKYNGQPLYKLAREGKTVEVKSRNIKIYELELLEFNIDSLKIRVKCSKGTYIRSLAIDIGKTLGCGGHLIALQRTQSGPFKLSEAFRLEQLKDLSFEQKIASITNIESVFIDKPIYSLLEEEKDDLYKRGLFADKPHLDGTVRIYDVEKFVAIAEFDKGKLINKKFFDQDILISE.

The active-site Nucleophile is Asp-45.

This sequence belongs to the pseudouridine synthase TruB family. Type 1 subfamily.

The catalysed reaction is uridine(55) in tRNA = pseudouridine(55) in tRNA. Its function is as follows. Responsible for synthesis of pseudouridine from uracil-55 in the psi GC loop of transfer RNAs. The polypeptide is tRNA pseudouridine synthase B (Francisella tularensis subsp. tularensis (strain WY96-3418)).